The sequence spans 262 residues: RNA-binding protein 7 (262 aa).

G2 carries the post-translational modification N-acetylglycine. The region spanning R10 to G87 is the RRM domain. ZCCHC8 binding regions lie at residues L25 to P35 and H59 to F76. Residues V95 to M121 are disordered. Residues S133 and S134 each carry the phosphoserine modification. An Omega-N-methylarginine modification is found at R149. Disordered stretches follow at residues S159–R212 and S242–H262. Residues S165–Q194 are compositionally biased toward polar residues. A Phosphoserine modification is found at S201. The span at S242–R253 shows a compositional bias: basic and acidic residues.

As to quaternary structure, component of the nuclear exosome targeting (NEXT) complex composed of MTREX, ZCCHC8, and RBM7 that directs a subset of non-coding short-lived RNAs for exosomal degradation. Interacts with ZCCHC8 and SF3B2/SAP145. Binds to MTREX through ZCCHC8. Interacts with YWHAE and YWHAZ; these interactions are stress-dependent and RBM7 phosphorylation dependent; release RNA from the NEXT complex and may affect RNA targeting to the nuclear RNA exosomome for degradation. Interacts with MEPCE and LARP7, the core subunits of 7SK snRNP; upon genotoxic stress this interaction is enhanced, triggering the release of inactive P-TEFb complex from the core and P-TEFb complex activation. Phosphorylated at Ser-133 by MAPK14/p38-alpha-activated MAPKAPK2/MK2; this phosphorylation is stress-dependent; this phosphorylation decreases its RNA-binding capacity therefore affecting RNA nuclear exosome-mediated degradation. This phosphorylation mediates YWHAE and YWHAZ interactions.

Its subcellular location is the nucleus. The protein localises to the nucleoplasm. Its function is as follows. RNA-binding subunit of the trimeric nuclear exosome targeting (NEXT) complex, a complex that functions as an RNA exosome cofactor that directs a subset of non-coding short-lived RNAs for exosomal degradation. NEXT is involved in surveillance and turnover of aberrant transcripts and non-coding RNAs. Binds preferentially polyuridine sequences and associates with newly synthesized RNAs, including pre-mRNAs and short-lived exosome substrates such as promoter upstream transcripts (PROMPTs), enhancer RNAs (eRNAs), and 3'-extended products from small nuclear RNAs (snRNAs). Participates in several biological processes including DNA damage response (DDR) and stress response. During stress response, activation of the p38MAPK-MK2 pathway decreases RBM7-RNA-binding and subsequently the RNA exosome degradation activities, thereby modulating the turnover of non-coding transcriptome. Participates in DNA damage response (DDR), through its interaction with MEPCE and LARP7, the core subunits of 7SK snRNP complex, that release the positive transcription elongation factor b (P-TEFb) complex from the 7SK snRNP. In turn, activation of P-TEFb complex induces the transcription of P-TEFb-dependent DDR genes to promote cell viability. This is RNA-binding protein 7 from Bos taurus (Bovine).